Reading from the N-terminus, the 129-residue chain is Glycine cleavage system H protein (129 aa).

The region spanning 24–106 is the Lipoyl-binding domain; sequence TYTVGITEHA…YTDGWIFKIR (83 aa). An N6-lipoyllysine modification is found at K65.

This sequence belongs to the GcvH family. In terms of assembly, the glycine cleavage system is composed of four proteins: P, T, L and H. It depends on (R)-lipoate as a cofactor.

Functionally, the glycine cleavage system catalyzes the degradation of glycine. The H protein shuttles the methylamine group of glycine from the P protein to the T protein. The polypeptide is Glycine cleavage system H protein (Enterobacter sp. (strain 638)).